Consider the following 196-residue polypeptide: Ras-related protein RabC (196 aa).

Gly13–Ser20 contacts GTP. Residues Phe35–Phe43 carry the Effector region motif. GTP-binding positions include Asp63 to Gln67 and Asn121 to Asp124. Residues Cys195 and Cys196 are each lipidated (S-geranylgeranyl cysteine).

It belongs to the small GTPase superfamily. Rab family.

It is found in the cell membrane. This Dictyostelium discoideum (Social amoeba) protein is Ras-related protein RabC (rabC).